Reading from the N-terminus, the 468-residue chain is 3-isopropylmalate dehydratase large subunit (468 aa).

[4Fe-4S] cluster contacts are provided by C347, C408, and C411.

It belongs to the aconitase/IPM isomerase family. LeuC type 1 subfamily. In terms of assembly, heterodimer of LeuC and LeuD. Requires [4Fe-4S] cluster as cofactor.

The catalysed reaction is (2R,3S)-3-isopropylmalate = (2S)-2-isopropylmalate. It functions in the pathway amino-acid biosynthesis; L-leucine biosynthesis; L-leucine from 3-methyl-2-oxobutanoate: step 2/4. In terms of biological role, catalyzes the isomerization between 2-isopropylmalate and 3-isopropylmalate, via the formation of 2-isopropylmaleate. This Methylobacillus flagellatus (strain ATCC 51484 / DSM 6875 / VKM B-1610 / KT) protein is 3-isopropylmalate dehydratase large subunit.